The following is a 63-amino-acid chain: Cecropin-C (63 aa).

A signal peptide spans 1–23 (MNFNKIFVFVALILAISLGQSEA). Arginine amide is present on Arg-62.

This sequence belongs to the cecropin family.

It localises to the secreted. Cecropins have lytic and antibacterial activity against several Gram-positive and Gram-negative bacteria. The sequence is that of Cecropin-C (CecC) from Drosophila orena (Fruit fly).